A 303-amino-acid chain; its full sequence is D-alanine--D-alanine ligase (303 aa).

The ATP-grasp domain occupies 100–295 (KQLLRRHGIL…FPALIARLIE (196 aa)). Position 127–180 (127–180 (GLGYPLFVKPNTGGSSLCLSRVTQPEGLAPALEAVFAHCGEAIVEPAIPGVEVT)) interacts with ATP. Residues Asp-249, Glu-262, and Asn-264 each contribute to the Mg(2+) site.

This sequence belongs to the D-alanine--D-alanine ligase family. The cofactor is Mg(2+). Mn(2+) is required as a cofactor.

Its subcellular location is the cytoplasm. It catalyses the reaction 2 D-alanine + ATP = D-alanyl-D-alanine + ADP + phosphate + H(+). Its pathway is cell wall biogenesis; peptidoglycan biosynthesis. Functionally, cell wall formation. The sequence is that of D-alanine--D-alanine ligase from Nitratidesulfovibrio vulgaris (strain DP4) (Desulfovibrio vulgaris).